Here is a 337-residue protein sequence, read N- to C-terminus: DNA-directed RNA polymerase subunit alpha (337 aa).

The alpha N-terminal domain (alpha-NTD) stretch occupies residues methionine 1–glutamate 233. Positions glycine 266 to phenylalanine 337 are alpha C-terminal domain (alpha-CTD).

It belongs to the RNA polymerase alpha chain family. In plastids the minimal PEP RNA polymerase catalytic core is composed of four subunits: alpha, beta, beta', and beta''. When a (nuclear-encoded) sigma factor is associated with the core the holoenzyme is formed, which can initiate transcription.

Its subcellular location is the plastid. It is found in the chloroplast. It carries out the reaction RNA(n) + a ribonucleoside 5'-triphosphate = RNA(n+1) + diphosphate. In terms of biological role, DNA-dependent RNA polymerase catalyzes the transcription of DNA into RNA using the four ribonucleoside triphosphates as substrates. This chain is DNA-directed RNA polymerase subunit alpha, found in Ceratophyllum demersum (Rigid hornwort).